Reading from the N-terminus, the 945-residue chain is Isoleucine--tRNA ligase (945 aa).

The 'HIGH' region motif lies at 66-76; sequence PYANGDIHLGH. Residue glutamate 581 coordinates L-isoleucyl-5'-AMP. The short motif at 622-626 is the 'KMSKS' region element; sequence KMSKS. An ATP-binding site is contributed by lysine 625. Residues cysteine 908, cysteine 911, cysteine 928, and cysteine 931 each coordinate Zn(2+).

This sequence belongs to the class-I aminoacyl-tRNA synthetase family. IleS type 1 subfamily. Monomer. Zn(2+) serves as cofactor.

It localises to the cytoplasm. The catalysed reaction is tRNA(Ile) + L-isoleucine + ATP = L-isoleucyl-tRNA(Ile) + AMP + diphosphate. Its function is as follows. Catalyzes the attachment of isoleucine to tRNA(Ile). As IleRS can inadvertently accommodate and process structurally similar amino acids such as valine, to avoid such errors it has two additional distinct tRNA(Ile)-dependent editing activities. One activity is designated as 'pretransfer' editing and involves the hydrolysis of activated Val-AMP. The other activity is designated 'posttransfer' editing and involves deacylation of mischarged Val-tRNA(Ile). The sequence is that of Isoleucine--tRNA ligase from Burkholderia cenocepacia (strain HI2424).